Reading from the N-terminus, the 679-residue chain is Methionine--tRNA ligase (679 aa).

The 'HIGH' region signature appears at Pro15–His25. The Zn(2+) site is built by Cys146, Cys149, Cys159, and Cys162. The 'KMSKS' region motif lies at Lys332–Ser336. Lys335 serves as a coordination point for ATP. Positions Asp578–Lys679 constitute a tRNA-binding domain.

It belongs to the class-I aminoacyl-tRNA synthetase family. MetG type 1 subfamily. As to quaternary structure, homodimer. Zn(2+) is required as a cofactor.

It localises to the cytoplasm. The catalysed reaction is tRNA(Met) + L-methionine + ATP = L-methionyl-tRNA(Met) + AMP + diphosphate. Its function is as follows. Is required not only for elongation of protein synthesis but also for the initiation of all mRNA translation through initiator tRNA(fMet) aminoacylation. This Shewanella pealeana (strain ATCC 700345 / ANG-SQ1) protein is Methionine--tRNA ligase.